The primary structure comprises 690 residues: Protein SPT2 homolog (690 aa).

Residues M1–Q579 form an important for interaction with DNA region. The stretch at E40–A82 forms a coiled coil. Disordered stretches follow at residues P105–P167 and E186–I619. Basic and acidic residues predominate over residues E186–K228. Over residues S229–K243 the composition is skewed to low complexity. 2 stretches are compositionally biased toward basic and acidic residues: residues E244 to A259 and T271 to S285. Over residues H369–S380 the composition is skewed to polar residues. Residues G383–A396 show a composition bias toward gly residues. Residues G397–P442 show a composition bias toward low complexity. Composition is skewed to gly residues over residues G443 to G457, G465 to R477, and L489 to R521. A compositionally biased stretch (polar residues) spans V545–G565. The tract at residues G580–R690 is important for interaction with histones. A compositionally biased stretch (acidic residues) spans D593–E617. A coiled-coil region spans residues R650–R690.

It belongs to the SPT2 family. Interacts with POLR1A. Interacts with histones. Interacts with a heterotetrameric complex formed by histone H3 and H4, especially when the histone tetramer is not bound to DNA.

It is found in the nucleus. The protein resides in the nucleolus. Its function is as follows. Histone chaperone that stabilizes pre-existing histone tetramers and regulates replication-independent histone exchange on chromatin. Required for normal chromatin refolding in the coding region of transcribed genes, and for the suppression of spurious transcription. Binds DNA and histones and promotes nucleosome assembly (in vitro). Modulates RNA polymerase 1-mediated transcription. Required for optimal growth in the presence of the DNA damaging agents actinomycin D or mitomycin C (in vitro). Facilitates formation of tetrameric histone complexes containing histone H3 and H4. Modulates RNA polymerase 1-mediated transcription. Binds DNA, with a preference for branched DNA species, such as Y-form DNA and Holliday junction DNA. This chain is Protein SPT2 homolog (SPTY2D1), found in Gallus gallus (Chicken).